We begin with the raw amino-acid sequence, 360 residues long: Mannonate dehydratase (360 aa).

It belongs to the mannonate dehydratase family. The cofactor is Fe(2+). It depends on Mn(2+) as a cofactor.

The catalysed reaction is D-mannonate = 2-dehydro-3-deoxy-D-gluconate + H2O. The protein operates within carbohydrate metabolism; pentose and glucuronate interconversion. Catalyzes the dehydration of D-mannonate. In Thermotoga neapolitana, this protein is Mannonate dehydratase (uxuA).